A 349-amino-acid chain; its full sequence is NADH-quinone oxidoreductase subunit H (349 aa).

A run of 8 helical transmembrane segments spans residues 11–31, 83–103, 116–136, 162–182, 200–220, 252–272, 288–308, and 323–343; these read FPLLIIVGKTLLLLVILLLLV, GVFLLAPFVSATLALSTWAVI, VGLLYILAISSLEVYGVIMGG, IGFVLVTVILVSGSLDLTTIV, FLDWNWLVLFPMFIIFFISAL, LFFLGEYVAIVLMCALTTILF, VPGIIWFVLKVCFVFFWFAMV, and LGWKVFLPLSLAMVVITAAFL.

This sequence belongs to the complex I subunit 1 family. As to quaternary structure, NDH-1 is composed of 14 different subunits. Subunits NuoA, H, J, K, L, M, N constitute the membrane sector of the complex.

Its subcellular location is the cell inner membrane. The enzyme catalyses a quinone + NADH + 5 H(+)(in) = a quinol + NAD(+) + 4 H(+)(out). NDH-1 shuttles electrons from NADH, via FMN and iron-sulfur (Fe-S) centers, to quinones in the respiratory chain. The immediate electron acceptor for the enzyme in this species is believed to be ubiquinone. Couples the redox reaction to proton translocation (for every two electrons transferred, four hydrogen ions are translocated across the cytoplasmic membrane), and thus conserves the redox energy in a proton gradient. This subunit may bind ubiquinone. The polypeptide is NADH-quinone oxidoreductase subunit H (Bartonella henselae (strain ATCC 49882 / DSM 28221 / CCUG 30454 / Houston 1) (Rochalimaea henselae)).